The sequence spans 114 residues: Large ribosomal subunit protein uL22 (114 aa).

The protein belongs to the universal ribosomal protein uL22 family. Part of the 50S ribosomal subunit.

Its function is as follows. This protein binds specifically to 23S rRNA; its binding is stimulated by other ribosomal proteins, e.g. L4, L17, and L20. It is important during the early stages of 50S assembly. It makes multiple contacts with different domains of the 23S rRNA in the assembled 50S subunit and ribosome. The globular domain of the protein is located near the polypeptide exit tunnel on the outside of the subunit, while an extended beta-hairpin is found that lines the wall of the exit tunnel in the center of the 70S ribosome. This chain is Large ribosomal subunit protein uL22, found in Ehrlichia chaffeensis (strain ATCC CRL-10679 / Arkansas).